The primary structure comprises 167 residues: Leptin (167 aa).

Positions 1–21 are cleaved as a signal peptide; sequence MCWRPLCRFLWLWSYLSYVQA. Cys-117 and Cys-167 are disulfide-bonded.

Belongs to the leptin family.

The protein resides in the secreted. In terms of biological role, key player in the regulation of energy balance and body weight control. Once released into the circulation, has central and peripheral effects by binding LEPR, found in many tissues, which results in the activation of several major signaling pathways. In the hypothalamus, acts as an appetite-regulating factor that induces a decrease in food intake and an increase in energy consumption by inducing anorexinogenic factors and suppressing orexigenic neuropeptides, also regulates bone mass and secretion of hypothalamo-pituitary-adrenal hormones. In the periphery, increases basal metabolism, influences reproductive function, regulates pancreatic beta-cell function and insulin secretion, is pro-angiogenic for endothelial cell and affects innate and adaptive immunity. In the arcuate nucleus of the hypothalamus, activates by depolarization POMC neurons inducing FOS and SOCS3 expression to release anorexigenic peptides and inhibits by hyperpolarization NPY neurons inducing SOCS3 with a consequent reduction on release of orexigenic peptides. In addition to its known satiety inducing effect, has a modulatory role in nutrient absorption. In the intestine, reduces glucose absorption by enterocytes by activating PKC and leading to a sequential activation of p38, PI3K and ERK signaling pathways which exerts an inhibitory effect on glucose absorption. Acts as a growth factor on certain tissues, through the activation of different signaling pathways increases expression of genes involved in cell cycle regulation such as CCND1, via JAK2-STAT3 pathway, or VEGFA, via MAPK1/3 and PI3K-AKT1 pathways. May also play an apoptotic role via JAK2-STAT3 pathway and up-regulation of BIRC5 expression. Pro-angiogenic, has mitogenic activity on vascular endothelial cells and plays a role in matrix remodeling by regulating the expression of matrix metalloproteinases (MMPs) and tissue inhibitors of metalloproteinases (TIMPs). In innate immunity, modulates the activity and function of neutrophils by increasing chemotaxis and the secretion of oxygen radicals. Increases phagocytosis by macrophages and enhances secretion of pro-inflammatory mediators. Increases cytotoxic ability of NK cells. Plays a pro-inflammatory role, in synergy with IL1B, by inducing NOS2 which promotes the production of IL6, IL8 and Prostaglandin E2, through a signaling pathway that involves JAK2, PI3K, MAP2K1/MEK1 and MAPK14/p38. In adaptive immunity, promotes the switch of memory T-cells towards T helper-1 cell immune responses. Increases CD4(+)CD25(-) T cells proliferation and reduces autophagy during TCR (T cell receptor) stimulation, through MTOR signaling pathway activation and BCL2 up-regulation. This is Leptin (Lep) from Mus musculus (Mouse).